Reading from the N-terminus, the 293-residue chain is Ribosomal protein L11 methyltransferase (293 aa).

T145, G166, D188, and N230 together coordinate S-adenosyl-L-methionine.

Belongs to the methyltransferase superfamily. PrmA family.

It localises to the cytoplasm. It catalyses the reaction L-lysyl-[protein] + 3 S-adenosyl-L-methionine = N(6),N(6),N(6)-trimethyl-L-lysyl-[protein] + 3 S-adenosyl-L-homocysteine + 3 H(+). In terms of biological role, methylates ribosomal protein L11. The sequence is that of Ribosomal protein L11 methyltransferase from Shewanella pealeana (strain ATCC 700345 / ANG-SQ1).